Here is a 590-residue protein sequence, read N- to C-terminus: Muscarinic acetylcholine receptor M3 (590 aa).

Residues 1-67 are Extracellular-facing; that stretch reads MTLHNNNTTS…DPLGGHTIWQ (67 aa). Residues Asn6, Asn7, Asn15, Asn41, Asn48, and Asn53 are each glycosylated (N-linked (GlcNAc...) asparagine). Residues 68-91 form a helical membrane-spanning segment; it reads VVFIAFLTGVLALVTIIGNILVIV. The Cytoplasmic segment spans residues 92–104; sequence AFKVNKQLKTVNN. Residues 105–125 form a helical membrane-spanning segment; sequence YFLLSLACADLIIGVISMNLF. Residues 126-142 are Extracellular-facing; it reads TTYIIMNRWALGNLACD. Residues Cys141 and Cys221 are joined by a disulfide bond. Residues 143-164 traverse the membrane as a helical segment; sequence LWLSIDYVASNASVMNLLVISF. The Cytoplasmic segment spans residues 165-184; the sequence is DRYFSITRPLTYRAKRTTKR. The helical transmembrane segment at 185–207 threads the bilayer; the sequence is AGVMIGLAWVISFILWAPAILFW. Residues 208–229 are Extracellular-facing; the sequence is QYFVGKRTVPPGECFIQFLSEP. Residues 230 to 252 traverse the membrane as a helical segment; the sequence is TITFGTAIAAFYMPVTIMTILYW. Over 253–492 the chain is Cytoplasmic; sequence RIYKETEKRT…LIKEKKAAQT (240 aa). The Basolateral sorting signal signature appears at 275–281; the sequence is AEAENFV. Positions 324 to 357 are disordered; sequence AEQMDQDHSSSDSWNNNDAAASLENSASSDEEDI. Positions 334-345 are enriched in low complexity; that stretch reads SDSWNNNDAAAS. The residue at position 385 (Ser385) is a Phosphoserine. A disordered region spans residues 398 to 419; the sequence is SVGLERKPSKLQTQQSMDDGGS. Positions 407–419 are enriched in polar residues; the sequence is KLQTQQSMDDGGS. A helical membrane pass occupies residues 493-513; it reads LSAILLAFIITWTPYNIMVLV. Topologically, residues 514-527 are extracellular; sequence NTFCDSCIPKTYWN. Residues 528–547 form a helical membrane-spanning segment; that stretch reads LGYWLCYINSTVNPVCYALC. Topologically, residues 548-590 are cytoplasmic; the sequence is NKTFRNTFKMLLLCQCDKRKRRKQQYQQRQSVIFHKRVPEQAL.

Belongs to the G-protein coupled receptor 1 family. Muscarinic acetylcholine receptor subfamily. CHRM3 sub-subfamily. In terms of assembly, homodimer; the dimers can form tetramers. Interacts with NALCN. Interacts with TMEM147.

The protein localises to the cell membrane. The protein resides in the postsynaptic cell membrane. It is found in the basolateral cell membrane. Its subcellular location is the endoplasmic reticulum membrane. Its function is as follows. The muscarinic acetylcholine receptor mediates various cellular responses, including inhibition of adenylate cyclase, breakdown of phosphoinositides and modulation of potassium channels through the action of G proteins. Primary transducing effect is Pi turnover. The polypeptide is Muscarinic acetylcholine receptor M3 (CHRM3) (Bos taurus (Bovine)).